The sequence spans 261 residues: tRNA pseudouridine synthase A (261 aa).

The active-site Nucleophile is Asp52. Residue Tyr111 participates in substrate binding.

The protein belongs to the tRNA pseudouridine synthase TruA family. Homodimer.

The catalysed reaction is uridine(38/39/40) in tRNA = pseudouridine(38/39/40) in tRNA. Functionally, formation of pseudouridine at positions 38, 39 and 40 in the anticodon stem and loop of transfer RNAs. The protein is tRNA pseudouridine synthase A of Jannaschia sp. (strain CCS1).